The sequence spans 186 residues: Large ribosomal subunit protein bL9 (186 aa).

The segment at E153 to K186 is disordered. The span at V157–A169 shows a compositional bias: low complexity.

This sequence belongs to the bacterial ribosomal protein bL9 family.

Functionally, binds to the 23S rRNA. The sequence is that of Large ribosomal subunit protein bL9 from Wolbachia sp. subsp. Brugia malayi (strain TRS).